Here is a 254-residue protein sequence, read N- to C-terminus: Nickel import ATP-binding protein NikD (254 aa).

In terms of domain architecture, ABC transporter spans proline 2 to valine 241. Glycine 36–serine 43 serves as a coordination point for ATP.

It belongs to the ABC transporter superfamily. Nickel importer (TC 3.A.1.5.3) family. The complex is composed of two ATP-binding proteins (NikD and NikE), two transmembrane proteins (NikB and NikC) and a solute-binding protein (NikA).

It localises to the cell inner membrane. It catalyses the reaction Ni(2+)(out) + ATP + H2O = Ni(2+)(in) + ADP + phosphate + H(+). Part of the ABC transporter complex NikABCDE involved in nickel import. Responsible for energy coupling to the transport system. This is Nickel import ATP-binding protein NikD from Shigella dysenteriae serotype 1 (strain Sd197).